Reading from the N-terminus, the 331-residue chain is Ketol-acid reductoisomerase (NADP(+)) (331 aa).

Residues 2-182 (ARMYYDADAQ…GGTRAGILET (181 aa)) enclose the KARI N-terminal Rossmann domain. Residues 25–28 (YGSQ), Ser-51, Ser-53, and 83–86 (DEVQ) each bind NADP(+). His-108 is a catalytic residue. Position 134 (Gly-134) interacts with NADP(+). The region spanning 183 to 328 (TFREETETDL…QELRSMFSWL (146 aa)) is the KARI C-terminal knotted domain. 4 residues coordinate Mg(2+): Asp-191, Glu-195, Glu-227, and Glu-231. Residue Ser-252 participates in substrate binding.

It belongs to the ketol-acid reductoisomerase family. It depends on Mg(2+) as a cofactor.

It catalyses the reaction (2R)-2,3-dihydroxy-3-methylbutanoate + NADP(+) = (2S)-2-acetolactate + NADPH + H(+). The catalysed reaction is (2R,3R)-2,3-dihydroxy-3-methylpentanoate + NADP(+) = (S)-2-ethyl-2-hydroxy-3-oxobutanoate + NADPH + H(+). The protein operates within amino-acid biosynthesis; L-isoleucine biosynthesis; L-isoleucine from 2-oxobutanoate: step 2/4. It functions in the pathway amino-acid biosynthesis; L-valine biosynthesis; L-valine from pyruvate: step 2/4. Involved in the biosynthesis of branched-chain amino acids (BCAA). Catalyzes an alkyl-migration followed by a ketol-acid reduction of (S)-2-acetolactate (S2AL) to yield (R)-2,3-dihydroxy-isovalerate. In the isomerase reaction, S2AL is rearranged via a Mg-dependent methyl migration to produce 3-hydroxy-3-methyl-2-ketobutyrate (HMKB). In the reductase reaction, this 2-ketoacid undergoes a metal-dependent reduction by NADPH to yield (R)-2,3-dihydroxy-isovalerate. The chain is Ketol-acid reductoisomerase (NADP(+)) from Thermosynechococcus vestitus (strain NIES-2133 / IAM M-273 / BP-1).